The primary structure comprises 189 residues: Class A basic helix-loop-helix protein 15 (189 aa).

Residues 1 to 12 show a composition bias toward basic residues; sequence MKTKNRPPRRRA. Disordered stretches follow at residues 1–85 and 167–189; these read MKTK…ERER and TEAQ…REGT. Phosphothreonine is present on Thr25. Over residues 68 to 85 the composition is skewed to basic and acidic residues; that stretch reads GRRDSSIQRRLESNERER. The region spanning 75–127 is the bHLH domain; sequence QRRLESNERERQRMHKLNNAFQALREVIPHVRADKKLSKIETLTLAKNYIKSL.

Forms homodimers or heterodimers with TCF3 gene products E12 and E47. These dimers bind to the E-box site, however, heterodimer with MYOD1 does not bind target DNA. Expressed in brain, liver, spleen and skeletal muscle.

The protein resides in the nucleus. Its function is as follows. Plays a role in controlling the transcriptional activity of MYOD1, ensuring that expanding myoblast populations remain undifferentiated. Repression may occur through muscle-specific E-box occupancy by homodimers. May also negatively regulate bHLH-mediated transcription through an N-terminal repressor domain. Serves as a key regulator of acinar cell function, stability, and identity. Also required for normal organelle localization in exocrine cells and for mitochondrial calcium ion transport. May function as a unique regulator of gene expression in several different embryonic and postnatal cell lineages. Binds to the E-box consensus sequence 5'-CANNTG-3'. This is Class A basic helix-loop-helix protein 15 (BHLHA15) from Homo sapiens (Human).